Reading from the N-terminus, the 554-residue chain is Dihydroxy-acid dehydratase (554 aa).

Mg(2+) is bound at residue aspartate 78. [2Fe-2S] cluster is bound at residue cysteine 119. Residues aspartate 120 and lysine 121 each contribute to the Mg(2+) site. The residue at position 121 (lysine 121) is an N6-carboxylysine. Cysteine 191 contacts [2Fe-2S] cluster. Mg(2+) is bound at residue glutamate 444. Serine 470 (proton acceptor) is an active-site residue.

Belongs to the IlvD/Edd family. Homodimer. [2Fe-2S] cluster is required as a cofactor. Requires Mg(2+) as cofactor.

It carries out the reaction (2R)-2,3-dihydroxy-3-methylbutanoate = 3-methyl-2-oxobutanoate + H2O. It catalyses the reaction (2R,3R)-2,3-dihydroxy-3-methylpentanoate = (S)-3-methyl-2-oxopentanoate + H2O. It participates in amino-acid biosynthesis; L-isoleucine biosynthesis; L-isoleucine from 2-oxobutanoate: step 3/4. It functions in the pathway amino-acid biosynthesis; L-valine biosynthesis; L-valine from pyruvate: step 3/4. Its function is as follows. Functions in the biosynthesis of branched-chain amino acids. Catalyzes the dehydration of (2R,3R)-2,3-dihydroxy-3-methylpentanoate (2,3-dihydroxy-3-methylvalerate) into 2-oxo-3-methylpentanoate (2-oxo-3-methylvalerate) and of (2R)-2,3-dihydroxy-3-methylbutanoate (2,3-dihydroxyisovalerate) into 2-oxo-3-methylbutanoate (2-oxoisovalerate), the penultimate precursor to L-isoleucine and L-valine, respectively. In Nitratidesulfovibrio vulgaris (strain DP4) (Desulfovibrio vulgaris), this protein is Dihydroxy-acid dehydratase.